The chain runs to 131 residues: Holo-[acyl-carrier-protein] synthase (131 aa).

Mg(2+) is bound by residues Asp9 and Glu58.

It belongs to the P-Pant transferase superfamily. AcpS family. Mg(2+) serves as cofactor.

It is found in the cytoplasm. It carries out the reaction apo-[ACP] + CoA = holo-[ACP] + adenosine 3',5'-bisphosphate + H(+). In terms of biological role, transfers the 4'-phosphopantetheine moiety from coenzyme A to a Ser of acyl-carrier-protein. The protein is Holo-[acyl-carrier-protein] synthase of Salmonella arizonae (strain ATCC BAA-731 / CDC346-86 / RSK2980).